The chain runs to 231 residues: Somatolactin (231 aa).

Residues 1 to 24 (MLMFTAIQRGVWVALLWPHLLTAS) form the signal peptide. Disulfide bonds link Cys-29/Cys-39, Cys-89/Cys-205, and Cys-222/Cys-230. N-linked (GlcNAc...) asparagine glycosylation is found at Asn-35 and Asn-145.

This sequence belongs to the somatotropin/prolactin family. In terms of tissue distribution, pituitary gland.

The protein resides in the secreted. The sequence is that of Somatolactin from Siganus guttatus (Orange-spotted spinefoot).